The primary structure comprises 132 residues: Small ribosomal subunit protein uS8 (132 aa).

The protein belongs to the universal ribosomal protein uS8 family. As to quaternary structure, part of the 30S ribosomal subunit. Contacts proteins S5 and S12.

One of the primary rRNA binding proteins, it binds directly to 16S rRNA central domain where it helps coordinate assembly of the platform of the 30S subunit. This chain is Small ribosomal subunit protein uS8, found in Brucella ovis (strain ATCC 25840 / 63/290 / NCTC 10512).